The sequence spans 232 residues: Enolase-phosphatase E1 (232 aa).

The protein belongs to the HAD-like hydrolase superfamily. MasA/MtnC family. Monomer. The cofactor is Mg(2+).

It catalyses the reaction 5-methylsulfanyl-2,3-dioxopentyl phosphate + H2O = 1,2-dihydroxy-5-(methylsulfanyl)pent-1-en-3-one + phosphate. Its pathway is amino-acid biosynthesis; L-methionine biosynthesis via salvage pathway; L-methionine from S-methyl-5-thio-alpha-D-ribose 1-phosphate: step 3/6. The protein operates within amino-acid biosynthesis; L-methionine biosynthesis via salvage pathway; L-methionine from S-methyl-5-thio-alpha-D-ribose 1-phosphate: step 4/6. Functionally, bifunctional enzyme that catalyzes the enolization of 2,3-diketo-5-methylthiopentyl-1-phosphate (DK-MTP-1-P) into the intermediate 2-hydroxy-3-keto-5-methylthiopentenyl-1-phosphate (HK-MTPenyl-1-P), which is then dephosphorylated to form the acireductone 1,2-dihydroxy-3-keto-5-methylthiopentene (DHK-MTPene). This is Enolase-phosphatase E1 from Acidiphilium cryptum (strain JF-5).